The sequence spans 496 residues: Cobyric acid synthase (496 aa).

The 191-residue stretch at 257–447 folds into the GATase cobBQ-type domain; sequence KINVAIILLK…MHGILDNPAV (191 aa). Cysteine 338 serves as the catalytic Nucleophile. Residue histidine 439 is part of the active site.

The protein belongs to the CobB/CobQ family. CobQ subfamily.

The protein operates within cofactor biosynthesis; adenosylcobalamin biosynthesis. Catalyzes amidations at positions B, D, E, and G on adenosylcobyrinic A,C-diamide. NH(2) groups are provided by glutamine, and one molecule of ATP is hydrogenolyzed for each amidation. The chain is Cobyric acid synthase from Parabacteroides distasonis (strain ATCC 8503 / DSM 20701 / CIP 104284 / JCM 5825 / NCTC 11152).